A 127-amino-acid chain; its full sequence is Two-component response regulator ORR41 (127 aa).

Residues 7-125 (RVLLVEDEEI…KLGVILAKFR (119 aa)) enclose the Response regulatory domain. D60 is modified (4-aspartylphosphate).

It belongs to the ARR family. Type-C subfamily. Two-component system major event consists of a His-to-Asp phosphorelay between a sensor histidine kinase (HK) and a response regulator (RR). In plants, the His-to-Asp phosphorelay involves an additional intermediate named Histidine-containing phosphotransfer protein (HPt). This multistep phosphorelay consists of a His-Asp-His-Asp sequential transfer of a phosphate group between first a His and an Asp of the HK protein, followed by the transfer to a conserved His of the HPt protein and finally the transfer to an Asp in the receiver domain of the RR protein.

In terms of biological role, functions as a response regulator involved in His-to-Asp phosphorelay signal transduction system. Phosphorylation of the Asp residue in the receiver domain activates the ability of the protein to promote the transcription of target genes. May directly activate some type-A response regulators in response to cytokinins. The protein is Two-component response regulator ORR41 of Oryza sativa subsp. japonica (Rice).